We begin with the raw amino-acid sequence, 356 residues long: Alanine racemase (356 aa).

The Proton acceptor; specific for D-alanine role is filled by K35. N6-(pyridoxal phosphate)lysine is present on K35. Position 130 (R130) interacts with substrate. Y253 functions as the Proton acceptor; specific for L-alanine in the catalytic mechanism. Residue M301 participates in substrate binding.

Belongs to the alanine racemase family. Pyridoxal 5'-phosphate is required as a cofactor.

The catalysed reaction is L-alanine = D-alanine. The protein operates within amino-acid biosynthesis; D-alanine biosynthesis; D-alanine from L-alanine: step 1/1. Catalyzes the interconversion of L-alanine and D-alanine. May also act on other amino acids. The sequence is that of Alanine racemase (alr) from Paraburkholderia phytofirmans (strain DSM 17436 / LMG 22146 / PsJN) (Burkholderia phytofirmans).